The following is a 162-amino-acid chain: Protein-export protein SecB (162 aa).

The protein belongs to the SecB family. In terms of assembly, homotetramer, a dimer of dimers. One homotetramer interacts with 1 SecA dimer.

The protein resides in the cytoplasm. Its function is as follows. One of the proteins required for the normal export of preproteins out of the cell cytoplasm. It is a molecular chaperone that binds to a subset of precursor proteins, maintaining them in a translocation-competent state. It also specifically binds to its receptor SecA. The protein is Protein-export protein SecB of Pseudoalteromonas translucida (strain TAC 125).